Here is a 348-residue protein sequence, read N- to C-terminus: Doublesex- and mab-3-related transcription factor dmd-10 (348 aa).

2 DNA-binding regions (DM) span residues Cys43 to Phe91 and Cys119 to Arg166. The segment at Ser316–Val348 is disordered.

The protein belongs to the DMRT family. Dimorphically expressed in the dimorphically connected interneuron AVG; expression is observed in the AVG in males, but not in hermaphrodites.

The protein resides in the nucleus. In terms of biological role, transcription factor. Plays a role in neuronal signaling in polymodal sensory neuron ASH, downstream of sensory receptor activation. Required for maintenance of AVG synapses. In Caenorhabditis elegans, this protein is Doublesex- and mab-3-related transcription factor dmd-10.